Here is a 358-residue protein sequence, read N- to C-terminus: Gentisate 1,2-dioxygenase (358 aa).

Residues 239-358 (QTLRQRAEND…AFNFYAEAEP (120 aa)) enclose the Cupin type-1 domain.

It belongs to the gentisate 1,2-dioxygenase family. As to quaternary structure, homotetramer.

It catalyses the reaction 2,5-dihydroxybenzoate + O2 = 3-maleylpyruvate + H(+). It participates in aromatic compound metabolism; naphthalene degradation. Inhibited by 2,2'-dipyridyl. Functionally, catalyzes the oxygen-dependent ring fission of gentisate between the carboxyl and proximal hydroxyl groups at positions 1 and 2 of the aromatic ring to form maleylpyruvate. No activity with cathechol and protecatechuate as substrates. Part of a 3-hydroxybenzoic acid-degradation pathway. The polypeptide is Gentisate 1,2-dioxygenase (gdoA) (Haloferax sp).